A 336-amino-acid polypeptide reads, in one-letter code: L-rhamnono-gamma-lactonase (336 aa).

This sequence belongs to the metallo-dependent hydrolases superfamily. A divalent metal cation serves as cofactor.

The enzyme catalyses L-rhamnono-1,4-lactone + H2O = L-rhamnonate + H(+). Its activity is regulated as follows. Inhibited by Zn(2+), Fe(2+) and Cu(2+), but not by EDTA. Hydrolase with high substrate specificity for L-rhamnono-1,4-lactone. Catalyzes the second step in an alternative pathway for rhamnose utilization that does not involve phosphorylated intermediates. In Scheffersomyces stipitis (strain ATCC 58785 / CBS 6054 / NBRC 10063 / NRRL Y-11545) (Yeast), this protein is L-rhamnono-gamma-lactonase (LRA2).